Here is a 67-residue protein sequence, read N- to C-terminus: MAKERACRHCHYITTEDRCPVCGSRDLSDDWFDLVIVLDVESRIAKKLRESIPEAAKVPGKYAIRVR.

Residues Cys7, Cys10, Cys19, and Cys22 each contribute to the Zn(2+) site.

The protein belongs to the archaeal Spt4 family. In terms of assembly, heterodimer composed of Spt4 and Spt5. Interacts with RNA polymerase (RNAP). The complex interacts with FttA.

The protein resides in the chromosome. In terms of biological role, the Stp4-Spt5 complex stimulates transcription elongation on both naked DNA and histone-bound DNA (chromatin), facilitating transcription through the histone barrier. Neither protein functions alone. The complex also stimulates the transcription termination activity of FttA, neither protein alone stimulates FttA-dependent termination. This Thermococcus kodakarensis (strain ATCC BAA-918 / JCM 12380 / KOD1) (Pyrococcus kodakaraensis (strain KOD1)) protein is Transcription elongation factor Spt4.